Reading from the N-terminus, the 1258-residue chain is Plasma membrane calcium-transporting ATPase 3 (1258 aa).

Over residues 1 to 19 the composition is skewed to polar residues; sequence MGDMANSSIEFHPKPQQQR. The interval 1 to 22 is disordered; sequence MGDMANSSIEFHPKPQQQREVP. At 1–97 the chain is on the cytoplasmic side; sequence MGDMANSSIE…NFIPPKQPKT (97 aa). At Ser-8 the chain carries Phosphoserine. The helical transmembrane segment at 98–118 threads the bilayer; that stretch reads FLQLVWEALQDVTLIILEVAA. Over 119 to 155 the chain is Extracellular; that stretch reads IVSLGLSFYAPPGEESEACGNVSGGAEDEGEAEAGWI. The helical transmembrane segment at 156–176 threads the bilayer; sequence EGAAILLSVICVVLVTAFNDW. The Cytoplasmic portion of the chain corresponds to 177–364; the sequence is SKEKQFRGLQ…KEKSVLQGKL (188 aa). 2 disordered regions span residues 298 to 328 and 335 to 354; these read EEEK…GAVA and KSAE…NVPK. Composition is skewed to basic and acidic residues over residues 299–308 and 342–354; these read EEKKDKKGKQ and MEER…NVPK. A helical transmembrane segment spans residues 365–384; that stretch reads TKLAVQIGKAGLVMSAITVI. The Extracellular portion of the chain corresponds to 385 to 417; that stretch reads ILVLYFVIETFVVDGRVWLAECTPVYVQYFVKF. A helical membrane pass occupies residues 418–435; sequence FIIGVTVLVVAVPEGLPL. Over 436-849 the chain is Cytoplasmic; it reads AVTISLAYSV…MWGRNVYDSI (414 aa). Asp-473 (4-aspartylphosphate intermediate) is an active-site residue. Positions 794 and 798 each coordinate Mg(2+). A helical membrane pass occupies residues 850-869; sequence SKFLQFQLTVNVVAVIVAFT. The Extracellular segment spans residues 870 to 879; sequence GACITQDSPL. A helical transmembrane segment spans residues 880–900; the sequence is KAVQMLWVNLIMDTFASLALA. Topologically, residues 901–920 are cytoplasmic; it reads TEPPTESLLLRKPYGRDKPL. The helical transmembrane segment at 921-943 threads the bilayer; that stretch reads ISRTMMKNILGHAVYQLTIIFTL. Over 944–961 the chain is Extracellular; the sequence is LFVGELFFDIDSGRNAPL. The chain crosses the membrane as a helical span at residues 962–983; it reads HSPPSEHYTIIFNTFVMMQLFN. Over 984-1002 the chain is Cytoplasmic; the sequence is EINARKIHGERNVFDGIFS. Residues 1003 to 1024 form a helical membrane-spanning segment; that stretch reads NPIFCTIVLGTFGIQIVIVQFG. The Extracellular segment spans residues 1025–1034; the sequence is GKPFSCSPLS. The chain crosses the membrane as a helical span at residues 1035–1056; the sequence is TEQWLWCLFVGVGELVWGQVIA. The Cytoplasmic portion of the chain corresponds to 1057 to 1258; sequence TIPTSQLKCL…SPLHSMETSL (202 aa). Thr-1079 carries the phosphothreonine modification. Residues 1097–1114 are calmodulin-binding subdomain A; the sequence is LRRGQILWFRGLNRIQTQ. Thr-1113 is modified (phosphothreonine; by PKC). The segment at 1115–1124 is calmodulin-binding subdomain B; that stretch reads MEVVSTFKRS. Ser-1126 carries the post-translational modification Phosphoserine. The disordered stretch occupies residues 1204 to 1258; it reads ENEERLRAPPPPPPNQNNNAIDSGIYLTTHATKSATSSAFSSRPGSPLHSMETSL. A compositionally biased stretch (low complexity) spans 1231 to 1245; the sequence is TTHATKSATSSAFSS.

The protein belongs to the cation transport ATPase (P-type) (TC 3.A.3) family. Type IIB subfamily. Interacts with PDZD11. Interacts (via N-terminus) with YWHAE. Expressed predominantly in brain and skeletal muscle. Expressed in the molecular layer of the cerebellar cortex, in particular in granule cells (at protein level). Expressed in aldosterone producing glomerulosa cells of adrenal glands (at protein level). Detected at low levels in various tissues including testis, stomach, small intestine, and large intestine. In terms of tissue distribution, most abundant form in brain and most other tissues. As to expression, most abundant form in skeletal muscle and is also found in brain and at low levels in testis and kidney.

It is found in the cell membrane. The protein resides in the presynaptic cell membrane. It carries out the reaction Ca(2+)(in) + ATP + H2O = Ca(2+)(out) + ADP + phosphate + H(+). In terms of biological role, ATP-driven Ca(2+) ion pump involved in the maintenance of basal intracellular Ca(2+) levels at the presynaptic terminals. Uses ATP as an energy source to transport cytosolic Ca(2+) ions across the plasma membrane to the extracellular compartment. May counter-transport protons, but the mechanism and the stoichiometry of this Ca(2+)/H(+) exchange remains to be established. This Rattus norvegicus (Rat) protein is Plasma membrane calcium-transporting ATPase 3 (Atp2b3).